Here is a 185-residue protein sequence, read N- to C-terminus: MANAIIETAKERFAQSHQSLSREYASIRAGRANASLLDRIQVDYYGAPTPLNQLASITVPEARVLLISPFDKSSIKDIERALNASDLGITPANDGSVIRLVIPALTEETRKELAKEVKKVGENAKIAIRNIRRDAMDDAKKQEKAKEITEDELKTLEKDIQKATDDAIKEIDRMTAEKEKELLSV.

The protein belongs to the RRF family.

The protein localises to the cytoplasm. Responsible for the release of ribosomes from messenger RNA at the termination of protein biosynthesis. May increase the efficiency of translation by recycling ribosomes from one round of translation to another. This chain is Ribosome-recycling factor, found in Streptococcus pyogenes serotype M1.